The chain runs to 355 residues: UDP-N-acetylglucosamine--N-acetylmuramyl-(pentapeptide) pyrophosphoryl-undecaprenol N-acetylglucosamine transferase (355 aa).

UDP-N-acetyl-alpha-D-glucosamine is bound by residues 15–17 (TGG), Asn127, Arg163, Ser191, Ile244, 263–268 (ALTVSE), and Gln288.

Belongs to the glycosyltransferase 28 family. MurG subfamily.

The protein localises to the cell inner membrane. The enzyme catalyses di-trans,octa-cis-undecaprenyl diphospho-N-acetyl-alpha-D-muramoyl-L-alanyl-D-glutamyl-meso-2,6-diaminopimeloyl-D-alanyl-D-alanine + UDP-N-acetyl-alpha-D-glucosamine = di-trans,octa-cis-undecaprenyl diphospho-[N-acetyl-alpha-D-glucosaminyl-(1-&gt;4)]-N-acetyl-alpha-D-muramoyl-L-alanyl-D-glutamyl-meso-2,6-diaminopimeloyl-D-alanyl-D-alanine + UDP + H(+). It functions in the pathway cell wall biogenesis; peptidoglycan biosynthesis. Its function is as follows. Cell wall formation. Catalyzes the transfer of a GlcNAc subunit on undecaprenyl-pyrophosphoryl-MurNAc-pentapeptide (lipid intermediate I) to form undecaprenyl-pyrophosphoryl-MurNAc-(pentapeptide)GlcNAc (lipid intermediate II). This Sodalis glossinidius (strain morsitans) protein is UDP-N-acetylglucosamine--N-acetylmuramyl-(pentapeptide) pyrophosphoryl-undecaprenol N-acetylglucosamine transferase.